Reading from the N-terminus, the 111-residue chain is UPF0339 protein ACIAD0721 (111 aa).

2 tandem repeats follow at residues Ala10–Arg58 and Ala61–Leu109. The interval Ser89 to Gly111 is disordered.

Belongs to the UPF0339 family. Duplicated subfamily.

In Acinetobacter baylyi (strain ATCC 33305 / BD413 / ADP1), this protein is UPF0339 protein ACIAD0721.